An 87-amino-acid polypeptide reads, in one-letter code: MSIFRFFSKQTSAPTARERLQVLLAHERASVGQSDLVAVLREEILAVIAKHVQVDRDKVNVTMERGEHVTTLEVDIEIPMKAGVRAA.

It belongs to the MinE family.

Functionally, prevents the cell division inhibition by proteins MinC and MinD at internal division sites while permitting inhibition at polar sites. This ensures cell division at the proper site by restricting the formation of a division septum at the midpoint of the long axis of the cell. This chain is Cell division topological specificity factor, found in Rhizobium meliloti (strain 1021) (Ensifer meliloti).